Reading from the N-terminus, the 162-residue chain is Retinoic acid receptor responder protein 2 (162 aa).

Positions Met1–Ala20 are cleaved as a signal peptide. 3 disulfide bridges follow: Cys77–Cys87, Cys98–Cys117, and Cys101–Cys135. Residues Phe156–Pro162 constitute a propeptide that is removed on maturation.

Secreted in an inactive precursor form, prochemerin, which is proteolytically processed by a variety of extracellular proteases to generate forms with differing levels of bioactivity. For example, the removal of five amino acids results in chemerin-157, which exhibits the highest activity, while removal of six amino acids results in chemerin-156 which has slightly less activity. Some proteases are able to cleave at more than one site and chemerin forms may be sequentially processed by different enzymes to modulate activity levels. The coordinated expression and activity of chemerin-modifying enzymes is essential for regulating its bioactivation, inactivation and, consequently, biological function. Cathepsin G cleaves six C-terminal amino acids from prochemerin (chemerin-156), elastase is able to cleave five (chemerin-157), seven (chemerin-155) or ten (chemerin-152), plasmin cleaves four amino acids (chemerin-158), and tryptase cleaves four (chemerin-158) or seven (chemerin-155). Multiple cleavages might be required to fully activate chemerin, with an initial tryptase cleavage resulting in chemerin with low activity (chemerin-158), and a second cleavage by carboxypeptidase N or B producing highly active chemerin (chemerin-157).

Its subcellular location is the secreted. Adipocyte-secreted protein (adipokine) that regulates adipogenesis, metabolism and inflammation through activation of the chemokine-like receptor 1 (CMKLR1). Also acts as a ligand for CMKLR2. Can also bind to C-C chemokine receptor-like 2 (CCRL2), but with a lower affinity than it does to CMKLR1 or CMKLR2. Positively regulates adipocyte differentiation, modulates the expression of adipocyte genes involved in lipid and glucose metabolism and might play a role in angiogenesis, a process essential for the expansion of white adipose tissue. Also acts as a pro-inflammatory adipokine, causing an increase in secretion of pro-inflammatory and prodiabetic adipokines, which further impair adipose tissue metabolic function and have negative systemic effects including impaired insulin sensitivity, altered glucose and lipid metabolism, and a decrease in vascular function in other tissues. Can have both pro- and anti-inflammatory properties depending on the modality of enzymatic cleavage by different classes of proteases. Acts as a chemotactic factor for leukocyte populations expressing CMKLR1, particularly immature plasmacytoid dendritic cells, but also immature myeloid DCs, macrophages and natural killer cells. Exerts an anti-inflammatory role by preventing TNF/TNFA-induced VCAM1 expression and monocytes adhesion in vascular endothelial cells. The effect is mediated via inhibiting activation of NF-kappa-B and CRK/p38 through stimulation of AKT1/NOS3 signaling and nitric oxide production. Exhibits an antimicrobial function in the skin. This is Retinoic acid receptor responder protein 2 (RARRES2) from Bos taurus (Bovine).